The following is a 339-amino-acid chain: Glycerol-3-phosphate dehydrogenase [NAD(P)+] (339 aa).

The NADPH site is built by serine 13, tryptophan 14, and lysine 108. Sn-glycerol 3-phosphate is bound by residues lysine 108, glycine 139, and serine 141. Alanine 143 lines the NADPH pocket. Residues lysine 194, aspartate 247, serine 257, arginine 258, and asparagine 259 each contribute to the sn-glycerol 3-phosphate site. The active-site Proton acceptor is the lysine 194. Position 258 (arginine 258) interacts with NADPH. Valine 282 and glutamate 284 together coordinate NADPH.

It belongs to the NAD-dependent glycerol-3-phosphate dehydrogenase family.

The protein resides in the cytoplasm. The enzyme catalyses sn-glycerol 3-phosphate + NAD(+) = dihydroxyacetone phosphate + NADH + H(+). It catalyses the reaction sn-glycerol 3-phosphate + NADP(+) = dihydroxyacetone phosphate + NADPH + H(+). It participates in membrane lipid metabolism; glycerophospholipid metabolism. Catalyzes the reduction of the glycolytic intermediate dihydroxyacetone phosphate (DHAP) to sn-glycerol 3-phosphate (G3P), the key precursor for phospholipid synthesis. The chain is Glycerol-3-phosphate dehydrogenase [NAD(P)+] from Streptococcus mutans serotype c (strain ATCC 700610 / UA159).